Here is a 190-residue protein sequence, read N- to C-terminus: Xanthine phosphoribosyltransferase (190 aa).

Xanthine-binding residues include leucine 20 and asparagine 27. 128-132 provides a ligand contact to 5-phospho-alpha-D-ribose 1-diphosphate; the sequence is ANGHA. Residue lysine 156 participates in xanthine binding.

This sequence belongs to the purine/pyrimidine phosphoribosyltransferase family. Xpt subfamily. As to quaternary structure, homodimer.

It is found in the cytoplasm. The enzyme catalyses XMP + diphosphate = xanthine + 5-phospho-alpha-D-ribose 1-diphosphate. The protein operates within purine metabolism; XMP biosynthesis via salvage pathway; XMP from xanthine: step 1/1. Converts the preformed base xanthine, a product of nucleic acid breakdown, to xanthosine 5'-monophosphate (XMP), so it can be reused for RNA or DNA synthesis. The protein is Xanthine phosphoribosyltransferase of Pseudomonas aeruginosa (strain LESB58).